Here is a 100-residue protein sequence, read N- to C-terminus: Class II hydrophobin FOXG_02746 (100 aa).

Residues M1 to A17 form the signal peptide. 4 disulfides stabilise this stretch: C29-C79, C40-C70, C41-C53, and C80-C92.

It belongs to the cerato-ulmin hydrophobin family. In terms of assembly, homodimer. Homodimers further self-assemble to form highly ordered films at water-air interfaces through intermolecular interactions.

The protein resides in the secreted. It is found in the cell wall. Functionally, aerial growth, conidiation, and dispersal of filamentous fungi in the environment rely upon a capability of their secreting small amphipathic proteins called hydrophobins (HPBs) with low sequence identity. Class I can self-assemble into an outermost layer of rodlet bundles on aerial cell surfaces, conferring cellular hydrophobicity that supports fungal growth, development and dispersal; whereas Class II form highly ordered films at water-air interfaces through intermolecular interactions but contribute nothing to the rodlet structure. FOXG_02746 is a class II hydrophobin that is likely required for plant colonization. The sequence is that of Class II hydrophobin FOXG_02746 from Fusarium oxysporum f. sp. lycopersici (strain 4287 / CBS 123668 / FGSC 9935 / NRRL 34936) (Fusarium vascular wilt of tomato).